Here is a 164-residue protein sequence, read N- to C-terminus: uncharacterized protein (164 aa).

It is found in the mitochondrion. This is an uncharacterized protein from Arabidopsis thaliana (Mouse-ear cress).